The sequence spans 607 residues: Elongation factor 4 (607 aa).

One can recognise a tr-type G domain in the interval 11–193 (SKIRNFSIIA…QIVEKVPAPA (183 aa)). Residues 23-28 (DHGKST) and 140-143 (NKID) each bind GTP.

This sequence belongs to the TRAFAC class translation factor GTPase superfamily. Classic translation factor GTPase family. LepA subfamily.

The protein resides in the cell membrane. The catalysed reaction is GTP + H2O = GDP + phosphate + H(+). Required for accurate and efficient protein synthesis under certain stress conditions. May act as a fidelity factor of the translation reaction, by catalyzing a one-codon backward translocation of tRNAs on improperly translocated ribosomes. Back-translocation proceeds from a post-translocation (POST) complex to a pre-translocation (PRE) complex, thus giving elongation factor G a second chance to translocate the tRNAs correctly. Binds to ribosomes in a GTP-dependent manner. The sequence is that of Elongation factor 4 from Bacillus cereus (strain B4264).